A 460-amino-acid chain; its full sequence is Ribosomal protein uS12 methylthiotransferase RimO (460 aa).

Positions 16–130 (NKIHFISLGC…ILSAIESKES (115 aa)) constitute an MTTase N-terminal domain. Cys-25, Cys-61, Cys-93, Cys-164, Cys-168, and Cys-171 together coordinate [4Fe-4S] cluster. A Radical SAM core domain is found at 150–382 (STPKHYAYLK…SQTQKKNVEK (233 aa)). A TRAM domain is found at 385 to 455 (KQFVGKIVEA…GYDLVGRVVN (71 aa)).

It belongs to the methylthiotransferase family. RimO subfamily. [4Fe-4S] cluster is required as a cofactor.

The protein resides in the cytoplasm. The catalysed reaction is L-aspartate(89)-[ribosomal protein uS12]-hydrogen + (sulfur carrier)-SH + AH2 + 2 S-adenosyl-L-methionine = 3-methylsulfanyl-L-aspartate(89)-[ribosomal protein uS12]-hydrogen + (sulfur carrier)-H + 5'-deoxyadenosine + L-methionine + A + S-adenosyl-L-homocysteine + 2 H(+). In terms of biological role, catalyzes the methylthiolation of an aspartic acid residue of ribosomal protein uS12. The protein is Ribosomal protein uS12 methylthiotransferase RimO of Chlamydia abortus (strain DSM 27085 / S26/3) (Chlamydophila abortus).